We begin with the raw amino-acid sequence, 280 residues long: MSALILDGKALAQKTEAELSERVAALKSKTGRTPILATILVGGDPASATYVRMKGNACTRIGMDSMKVELPETTTTDELLAKIAELNNNPDVHGILLQHPVPSQIDERACFDAIDLSKDVDGVTCLGFGRMAMGEEAYGCATPKGIMRLLEAYEIPLEGKHAVVVGRSPILGKPMALMLLNANATVTICHSRTKDLQSHIATADIVVGAVGIPEFIKADWIKPGAVVVDAGYHPGGVGDIELGPLADKASALTPVPGGVGPMTINTLIYQSVDSGEKKLA.

NADP(+) contacts are provided by residues Gly-166–Ser-168 and Ser-191.

Belongs to the tetrahydrofolate dehydrogenase/cyclohydrolase family. As to quaternary structure, homodimer.

It carries out the reaction (6R)-5,10-methylene-5,6,7,8-tetrahydrofolate + NADP(+) = (6R)-5,10-methenyltetrahydrofolate + NADPH. The enzyme catalyses (6R)-5,10-methenyltetrahydrofolate + H2O = (6R)-10-formyltetrahydrofolate + H(+). It functions in the pathway one-carbon metabolism; tetrahydrofolate interconversion. In terms of biological role, catalyzes the oxidation of 5,10-methylenetetrahydrofolate to 5,10-methenyltetrahydrofolate and then the hydrolysis of 5,10-methenyltetrahydrofolate to 10-formyltetrahydrofolate. In Teredinibacter turnerae (strain ATCC 39867 / T7901), this protein is Bifunctional protein FolD.